The chain runs to 751 residues: Proton-associated sugar transporter A (751 aa).

6 helical membrane-spanning segments follow: residues 93–113, 123–143, 155–175, 191–211, 233–253, and 268–288; these read ILFG…PVLL, SLVW…LGAW, RPFI…LLNG, WGIL…DSAD, IHAL…GIHW, and VIYI…LVSI. Residue Thr500 is modified to Phosphothreonine. Transmembrane regions (helical) follow at residues 536 to 556, 576 to 596, 606 to 626, 630 to 650, 688 to 708, and 710 to 730; these read GWLS…EVVF, VTMG…YSAI, VRTL…LATL, LYVV…LCTL, FLAQ…VGSA, and GVMY…SLCV.

Belongs to the glycoside-pentoside-hexuronide (GPH) cation symporter transporter (TC 2.A.2) family. As to expression, predominantly expressed in brain.

It localises to the membrane. The enzyme catalyses D-galactose(in) + H(+)(in) = D-galactose(out) + H(+)(out). The catalysed reaction is D-glucose(out) + H(+)(out) = D-glucose(in) + H(+)(in). In terms of biological role, proton-associated glucose transporter in the brain. The chain is Proton-associated sugar transporter A from Rattus norvegicus (Rat).